We begin with the raw amino-acid sequence, 149 residues long: Large ribosomal subunit protein bL9 (149 aa).

The protein belongs to the bacterial ribosomal protein bL9 family.

Its function is as follows. Binds to the 23S rRNA. The sequence is that of Large ribosomal subunit protein bL9 from Helicobacter pylori (strain G27).